The sequence spans 254 residues: Very-long-chain (3R)-3-hydroxyacyl-CoA dehydratase 2 (254 aa).

Ala2 is subject to N-acetylalanine. Residues 2–41 (AAVAATAAAKGNGGGGGRAGAGDASGTRKKKGPGPLATAY) are Cytoplasmic-facing. Positions 11 to 33 (KGNGGGGGRAGAGDASGTRKKKG) are disordered. Over residues 12–21 (GNGGGGGRAG) the composition is skewed to gly residues. A helical membrane pass occupies residues 42-60 (LVIYNVVMTAGWLVIAVGL). The Lumenal segment spans residues 61–79 (VRAYLAKGSYHSLYYSIEK). Residues 80–97 (PLKFFQTGALLEILHCAI) traverse the membrane as a helical segment. Residues 98–107 (GIVPSSVVLT) lie on the Cytoplasmic side of the membrane. A helical transmembrane segment spans residues 108 to 125 (SFQVMSRVFLIWAVTHSV). The Lumenal segment spans residues 126-130 (KEVQS). Residues 131–146 (EDSVLLFVIAWTITEI) traverse the membrane as a helical segment. At 147 to 169 (IRYSFYTFSLLNHLPYLIKWARY) the chain is on the cytoplasmic side. The chain crosses the membrane as a helical span at residues 170-187 (TLFIVLYPMGVSGELLTI). Active-site residues include Tyr176 and Glu183. Residues 188–217 (YAALPFVRQAGLYSISLPNKYNFSFDYYAF) lie on the Lumenal side of the membrane. The interval 198–214 (GLYSISLPNKYNFSFDY) is may be involved in interaction with TECR. Residue Asn209 is glycosylated (N-linked (GlcNAc...) asparagine). A helical transmembrane segment spans residues 218–235 (LILIMISYIPIFPQLYFH). The Cytoplasmic portion of the chain corresponds to 236-254 (MIHQRRKILSHTEEHKKFE).

Belongs to the very long-chain fatty acids dehydratase HACD family. In terms of assembly, may interact with enzymes of the ELO family (including ELOVL1); with those enzymes that mediate condensation, the first of the four steps of the reaction cycle responsible for fatty acids elongation, may be part of a larger fatty acids elongase complex. Interacts with BCAP31. Interacts (via the third lumenal loop) with TECR. Highly expressed in testis, spleen, prostate, colon and heart, followed by moderate expression in thymus, ovary, small intestine, peripheral blood leukocytes, liver, skeletal muscle and pancreas. Weakly detected in kidney, placenta, brain and lung.

The protein resides in the endoplasmic reticulum membrane. It catalyses the reaction a very-long-chain (3R)-3-hydroxyacyl-CoA = a very-long-chain (2E)-enoyl-CoA + H2O. The enzyme catalyses (3R)-hydroxyhexadecanoyl-CoA = (2E)-hexadecenoyl-CoA + H2O. The catalysed reaction is (3R)-hydroxyoctadecanoyl-CoA = (2E)-octadecenoyl-CoA + H2O. It carries out the reaction (3R)-hydroxyeicosanoyl-CoA = (2E)-eicosenoyl-CoA + H2O. It catalyses the reaction (3R)-hydroxydocosanoyl-CoA = (2E)-docosenoyl-CoA + H2O. The enzyme catalyses (3R)-hydroxytetracosanoyl-CoA = (2E)-tetracosenoyl-CoA + H2O. The catalysed reaction is (3R)-hydroxyhexacosanoyl-CoA = (2E)-hexacosenoyl-CoA + H2O. Its pathway is lipid metabolism; fatty acid biosynthesis. Catalyzes the third of the very long-chain fatty acids (VLCFA) elongation four-step cycle (condensation, reduction, dehydration, and reduction). This endoplasmic reticulum-elongation process is characterized by the addition of two carbons to the lipid chain through each cycle. This enzyme catalyzes the dehydration of the 3-hydroxyacyl-CoA intermediate into trans-2,3-enoyl-CoA, within each cycle of elongation. Therefore, it participates in the production of various VLCFAs involved in multiple biological processes as precursors of membrane lipids and lipid mediators. This chain is Very-long-chain (3R)-3-hydroxyacyl-CoA dehydratase 2, found in Homo sapiens (Human).